The chain runs to 264 residues: tRNA pseudouridine synthase A (264 aa).

The Nucleophile role is filled by aspartate 56. Residue tyrosine 114 coordinates substrate.

It belongs to the tRNA pseudouridine synthase TruA family. As to quaternary structure, homodimer.

It carries out the reaction uridine(38/39/40) in tRNA = pseudouridine(38/39/40) in tRNA. Functionally, formation of pseudouridine at positions 38, 39 and 40 in the anticodon stem and loop of transfer RNAs. The protein is tRNA pseudouridine synthase A of Buchnera aphidicola subsp. Baizongia pistaciae (strain Bp).